A 322-amino-acid polypeptide reads, in one-letter code: PI-PLC X domain-containing protein 3 (322 aa).

In terms of domain architecture, PI-PLC X-box spans threonine 22–asparagine 197. Active-site residues include histidine 37 and histidine 114.

The polypeptide is PI-PLC X domain-containing protein 3 (plcxd3) (Danio rerio (Zebrafish)).